We begin with the raw amino-acid sequence, 427 residues long: 3-deoxy-D-manno-octulosonic acid transferase (427 aa).

Residues 4–24 traverse the membrane as a helical; Signal-anchor segment; that stretch reads FFYTSLLLICQPLILCFIGLL. Glu-62 serves as the catalytic Proton acceptor. CMP-binding positions include 270–271, 311–313, and 337–340; these read PR, MGE, and NPLE.

It belongs to the glycosyltransferase group 1 family. Glycosyltransferase 30 subfamily.

The protein resides in the cell inner membrane. The enzyme catalyses lipid IVA (E. coli) + CMP-3-deoxy-beta-D-manno-octulosonate = alpha-Kdo-(2-&gt;6)-lipid IVA (E. coli) + CMP + H(+). Its pathway is bacterial outer membrane biogenesis; LPS core biosynthesis. In terms of biological role, involved in lipopolysaccharide (LPS) biosynthesis. Catalyzes the transfer of a single 3-deoxy-D-manno-octulosonate (Kdo) residue from CMP-Kdo to lipid IV(A), the tetraacyldisaccharide-1,4'-bisphosphate precursor of lipid A. Is strictly monofunctional, i.e. is capable of adding only a single Kdo residue to the acceptor lipid. This Haemophilus influenzae (strain ATCC 51907 / DSM 11121 / KW20 / Rd) protein is 3-deoxy-D-manno-octulosonic acid transferase (waaA).